A 930-amino-acid chain; its full sequence is Isoleucine--tRNA ligase (930 aa).

The short motif at 57–67 (PYANGNIHVGH) is the 'HIGH' region element. E554 provides a ligand contact to L-isoleucyl-5'-AMP. Positions 595 to 599 (KMSKS) match the 'KMSKS' region motif. K598 provides a ligand contact to ATP. Zn(2+) contacts are provided by C888, C891, C908, and C911.

Belongs to the class-I aminoacyl-tRNA synthetase family. IleS type 1 subfamily. In terms of assembly, monomer. It depends on Zn(2+) as a cofactor.

It localises to the cytoplasm. The catalysed reaction is tRNA(Ile) + L-isoleucine + ATP = L-isoleucyl-tRNA(Ile) + AMP + diphosphate. In terms of biological role, catalyzes the attachment of isoleucine to tRNA(Ile). As IleRS can inadvertently accommodate and process structurally similar amino acids such as valine, to avoid such errors it has two additional distinct tRNA(Ile)-dependent editing activities. One activity is designated as 'pretransfer' editing and involves the hydrolysis of activated Val-AMP. The other activity is designated 'posttransfer' editing and involves deacylation of mischarged Val-tRNA(Ile). This is Isoleucine--tRNA ligase from Streptococcus pneumoniae (strain Hungary19A-6).